The following is a 774-amino-acid chain: Multiple C2 domain and transmembrane region protein 11 (774 aa).

The span at 1–12 (MAVNGTGNGTGD) shows a compositional bias: gly residues. A disordered region spans residues 1–30 (MAVNGTGNGTGDGDFSLKETSPNIGNGGVN). C2 domains lie at 9-145 (GTGD…PQWY), 184-307 (VTGE…SLWY), and 338-471 (LDES…THSY). Residues Asp-62, Asn-110, Asp-112, and Asp-118 each coordinate Ca(2+). 2 consecutive transmembrane segments (helical) span residues 608–628 (LFVVFLPKYCVFSMLLYCFVF) and 722–742 (FVSCGVICFVSMKLLLTFLAF).

It belongs to the MCTP family. Ca(2+) serves as cofactor. As to expression, observed in flowers.

It is found in the endoplasmic reticulum membrane. Its function is as follows. May function as a signaling molecule by regulating the trafficking of other regulators. This is Multiple C2 domain and transmembrane region protein 11 from Arabidopsis thaliana (Mouse-ear cress).